We begin with the raw amino-acid sequence, 398 residues long: Nocardicin C N-oxygenase (398 aa).

The tract at residues 63–90 is disordered; it reads RARAAGREETPRVTPEAAPAGSMLSMDP. His-93, Arg-97, Arg-289, His-345, and Cys-347 together coordinate heme.

It belongs to the cytochrome P450 family. It depends on heme as a cofactor.

It catalyses the reaction nocardicin C + 4 reduced [2Fe-2S]-[ferredoxin] + 2 O2 + 2 H(+) = nocardicin A + 4 oxidized [2Fe-2S]-[ferredoxin] + 3 H2O. It participates in antibiotic biosynthesis. Involved in the biosynthesis of the beta-lactam antibiotic nocardicin A. Catalyzes the conversion of nocardicin C to nocardicin A. Cannot use nocardicin G. In Nocardia uniformis subsp. tsuyamanensis, this protein is Nocardicin C N-oxygenase.